A 78-amino-acid chain; its full sequence is Probable [Fe-S]-dependent transcriptional repressor (78 aa).

Positions 56, 61, 64, and 70 each coordinate iron-sulfur cluster.

Belongs to the FeoC family.

In terms of biological role, may function as a transcriptional regulator that controls feoABC expression. This chain is Probable [Fe-S]-dependent transcriptional repressor, found in Escherichia coli O127:H6 (strain E2348/69 / EPEC).